The sequence spans 160 residues: Lipoprotein signal peptidase (160 aa).

The next 3 membrane-spanning stretches (helical) occupy residues 6–26 (VWSSLFVVILAVLIDQGIKYL), 58–78 (LAWLHDGGLIAITLAVIAFVL), and 95–115 (FALVIGGAIGNLIDRVMHGYV). Catalysis depends on residues D117 and D135. Residues 127-147 (SFAVFNLADAFITIGAGLIIL) traverse the membrane as a helical segment.

Belongs to the peptidase A8 family.

The protein resides in the cell inner membrane. It carries out the reaction Release of signal peptides from bacterial membrane prolipoproteins. Hydrolyzes -Xaa-Yaa-Zaa-|-(S,diacylglyceryl)Cys-, in which Xaa is hydrophobic (preferably Leu), and Yaa (Ala or Ser) and Zaa (Gly or Ala) have small, neutral side chains.. Its pathway is protein modification; lipoprotein biosynthesis (signal peptide cleavage). Its function is as follows. This protein specifically catalyzes the removal of signal peptides from prolipoproteins. The polypeptide is Lipoprotein signal peptidase (Brucella abortus (strain S19)).